The chain runs to 318 residues: Trans-prenyltransferase (318 aa).

Residues 1–21 traverse the membrane as a helical segment; the sequence is MLHLIYISIIVVLIIILISYT. Positions 85, 88, and 122 each coordinate isopentenyl diphosphate. Mg(2+)-binding residues include Asp129 and Asp135. A dimethylallyl diphosphate-binding site is contributed by Arg140. Residue Arg141 participates in isopentenyl diphosphate binding. Dimethylallyl diphosphate is bound by residues Lys216, Thr217, and Gln254.

This sequence belongs to the FPP/GGPP synthase family. Asfivirus trans-prenyltransferase subfamily. Mg(2+) is required as a cofactor.

The protein localises to the host endoplasmic reticulum. It is found in the host membrane. It catalyses the reaction isopentenyl diphosphate + dimethylallyl diphosphate = (2E)-geranyl diphosphate + diphosphate. It carries out the reaction isopentenyl diphosphate + (2E)-geranyl diphosphate = (2E,6E)-farnesyl diphosphate + diphosphate. The enzyme catalyses isopentenyl diphosphate + (2E,6E)-farnesyl diphosphate = (2E,6E,10E)-geranylgeranyl diphosphate + diphosphate. The catalysed reaction is isopentenyl diphosphate + (2E,6E,10E)-geranylgeranyl diphosphate = (2E,6E,10E,14E)-geranylfarnesyl diphosphate + diphosphate. It participates in isoprenoid biosynthesis; farnesyl diphosphate biosynthesis; farnesyl diphosphate from geranyl diphosphate and isopentenyl diphosphate: step 1/1. The protein operates within isoprenoid biosynthesis; geranyl diphosphate biosynthesis; geranyl diphosphate from dimethylallyl diphosphate and isopentenyl diphosphate: step 1/1. Its pathway is isoprenoid biosynthesis; geranylgeranyl diphosphate biosynthesis; geranylgeranyl diphosphate from farnesyl diphosphate and isopentenyl diphosphate: step 1/1. Functionally, trans-prenyltransferase that catalyzes the sequential condensation of isopentenyl diphosphate (IPP) with different allylic diphosphates, such as dimethylallyl diphosphate (DMAPP), geranyl diphosphate (GPP), farnesyl diphosphate (FPP) and geranylgeranyl diphosphate (GGPP), farnesyl diphosphate being the best allylic substrate. The polypeptide is Trans-prenyltransferase (African swine fever virus (isolate Warthog/Namibia/Wart80/1980) (ASFV)).